The primary structure comprises 504 residues: Apoptosis inhibitor 5 (504 aa).

An ARM-like and Heat-like helical repeats region spans residues 1 to 360 (MPTVEELYRN…HQLGRKLPDF (360 aa)). Lys251 is modified (N6-acetyllysine). Residues 370-391 (LKDFKIRLQYFARGLQVYIRQL) are leucine-zipper. Phosphothreonine is present on Thr399. The tract at residues 452 to 504 (GQKRASEDTTSGSPPKKSSAGPKRDARQIYNPPSGKYSSNLGNFNYERSLQGK) is disordered. A Nuclear localization signal motif is present at residues 454 to 475 (KRASEDTTSGSPPKKSSAGPKR). A phosphoserine mark is found at Ser462, Ser464, and Ser469. Positions 462-472 (SGSPPKKSSAG) are enriched in low complexity. Over residues 487-504 (KYSSNLGNFNYERSLQGK) the composition is skewed to polar residues.

This sequence belongs to the API5 family. As to quaternary structure, monomer. Interacts with FGF2 and ACIN1. In terms of processing, acetylation at Lys-251 impairs antiapoptotic function.

Its subcellular location is the nucleus. The protein resides in the cytoplasm. In terms of biological role, antiapoptotic factor that may have a role in protein assembly. Negatively regulates ACIN1. By binding to ACIN1, it suppresses ACIN1 cleavage from CASP3 and ACIN1-mediated DNA fragmentation. Also known to efficiently suppress E2F1-induced apoptosis. This Pongo abelii (Sumatran orangutan) protein is Apoptosis inhibitor 5 (API5).